The chain runs to 39 residues: Potassium channel toxin alpha-KTx 2.24 (39 aa).

Cystine bridges form between Cys7-Cys29, Cys13-Cys34, and Cys17-Cys36.

This sequence belongs to the short scorpion toxin superfamily. Potassium channel inhibitor family. Alpha-KTx 02 subfamily. In terms of tissue distribution, expressed by the venom gland.

It is found in the secreted. Blocks human voltage-gated potassium (Kv) channels Kv1.1/KCNA, Kv1.2/KCNA2 and Kv1.3/KCNA3. Exhibits high affinity for Kv1.2/KCNA2 and selectivity over Kv1.1/KCNA and Kv1.3/KCNA3. In Centruroides bonito (Scorpion), this protein is Potassium channel toxin alpha-KTx 2.24.